Here is a 267-residue protein sequence, read N- to C-terminus: Glutamate racemase (267 aa).

Substrate contacts are provided by residues D10 to S11 and Y42 to G43. Residue C73 is the Proton donor/acceptor of the active site. N74 to T75 is a binding site for substrate. The active-site Proton donor/acceptor is C183. Position 184–185 (T184–H185) interacts with substrate.

This sequence belongs to the aspartate/glutamate racemases family.

The enzyme catalyses L-glutamate = D-glutamate. Its pathway is cell wall biogenesis; peptidoglycan biosynthesis. In terms of biological role, provides the (R)-glutamate required for cell wall biosynthesis. This chain is Glutamate racemase, found in Limosilactobacillus reuteri (strain DSM 20016) (Lactobacillus reuteri).